A 252-amino-acid polypeptide reads, in one-letter code: Gamma carbonic anhydrase-like 1, mitochondrial (252 aa).

Residues 1 to 29 (MATSIARLSRRGVTSNLIRRCFAAEAALA) constitute a mitochondrion transit peptide. Substrate is bound by residues 99–101 (RGD) and 114–115 (QE). H120 lines the Zn(2+) pocket. R148, Q160, and Y227 together coordinate substrate.

This sequence belongs to the gamma-class carbonic anhydrase family. Component of the mitochondrial oxidoreductase respiratory chain complex I; element of the extra matrix-exposed domain, which is attached to the membrane arm of this complex. Interacts with GAMMACA2.

It is found in the mitochondrion membrane. Functionally, involved in complex I assembly in mitochondria and respiration. In Arabidopsis thaliana (Mouse-ear cress), this protein is Gamma carbonic anhydrase-like 1, mitochondrial (GAMMACAL1).